The sequence spans 494 residues: Lipopolysaccharide core galacturonosyltransferase RgtB (494 aa).

Transmembrane regions (helical) follow at residues 9 to 29 (ISWI…VRLA), 74 to 94 (LTAL…LYGL), 104 to 124 (ALVA…FEMQ), 127 to 147 (LTHT…FIRS), 156 to 176 (YLIA…FAIL), 197 to 217 (WRLG…LFWL), 251 to 271 (LALA…IVFG), 291 to 311 (MMLV…AAGI), 316 to 336 (LVPM…AAGV), and 345 to 365 (FIPV…GSVA).

This sequence belongs to the glycosyltransferase 83 family.

Its subcellular location is the cell inner membrane. The protein operates within bacterial outer membrane biogenesis; LPS core biosynthesis. Involved in the modification of the lipopolysaccharide (LPS) inner core. Catalyzes the transfer of a galacturonic acid (GalA) residue to the 5-position of the outer Kdo (3-deoxy-D-manno-octulosonic acid) residue of the LPS inner core, using dodecaprenyl phosphate-GalA as the donor substrate. Acts after the other GalA transferase RgtA. The protein is Lipopolysaccharide core galacturonosyltransferase RgtB of Rhizobium johnstonii (strain DSM 114642 / LMG 32736 / 3841) (Rhizobium leguminosarum bv. viciae).